The chain runs to 471 residues: Glutamyl-tRNA(Gln) amidotransferase subunit A, mitochondrial (471 aa).

Residues lysine 64 and serine 141 each act as charge relay system in the active site. Residue serine 165 is the Acyl-ester intermediate of the active site.

Belongs to the amidase family. GatA subfamily. Subunit of the heterotrimeric GatCAB amidotransferase (AdT) complex, composed of A, B and C subunits.

The protein localises to the mitochondrion. It carries out the reaction L-glutamyl-tRNA(Gln) + L-glutamine + ATP + H2O = L-glutaminyl-tRNA(Gln) + L-glutamate + ADP + phosphate + H(+). In terms of biological role, allows the formation of correctly charged Gln-tRNA(Gln) through the transamidation of misacylated Glu-tRNA(Gln) in the mitochondria. The reaction takes place in the presence of glutamine and ATP through an activated gamma-phospho-Glu-tRNA(Gln). The polypeptide is Glutamyl-tRNA(Gln) amidotransferase subunit A, mitochondrial (Schizosaccharomyces pombe (strain 972 / ATCC 24843) (Fission yeast)).